Here is a 428-residue protein sequence, read N- to C-terminus: 3-phosphoshikimate 1-carboxyvinyltransferase (428 aa).

3-phosphoshikimate is bound by residues Lys21, Ser22, and Arg26. Residue Lys21 participates in phosphoenolpyruvate binding. Phosphoenolpyruvate is bound by residues Gly91 and Arg119. Residues Ser164, Gln166, Asp313, and Lys340 each contribute to the 3-phosphoshikimate site. Residue Gln166 participates in phosphoenolpyruvate binding. Asp313 functions as the Proton acceptor in the catalytic mechanism. Phosphoenolpyruvate-binding residues include Arg344 and Arg386.

This sequence belongs to the EPSP synthase family. As to quaternary structure, monomer.

It localises to the cytoplasm. The enzyme catalyses 3-phosphoshikimate + phosphoenolpyruvate = 5-O-(1-carboxyvinyl)-3-phosphoshikimate + phosphate. The protein operates within metabolic intermediate biosynthesis; chorismate biosynthesis; chorismate from D-erythrose 4-phosphate and phosphoenolpyruvate: step 6/7. In terms of biological role, catalyzes the transfer of the enolpyruvyl moiety of phosphoenolpyruvate (PEP) to the 5-hydroxyl of shikimate-3-phosphate (S3P) to produce enolpyruvyl shikimate-3-phosphate and inorganic phosphate. This is 3-phosphoshikimate 1-carboxyvinyltransferase from Campylobacter jejuni (strain RM1221).